The chain runs to 450 residues: Phosphoglucosamine mutase (450 aa).

Catalysis depends on Ser-97, which acts as the Phosphoserine intermediate. Residues Ser-97, Asp-236, Asp-238, and Asp-240 each contribute to the Mg(2+) site. Ser-97 carries the phosphoserine modification.

The protein belongs to the phosphohexose mutase family. It depends on Mg(2+) as a cofactor. Activated by phosphorylation.

It carries out the reaction alpha-D-glucosamine 1-phosphate = D-glucosamine 6-phosphate. Catalyzes the conversion of glucosamine-6-phosphate to glucosamine-1-phosphate. The chain is Phosphoglucosamine mutase from Prochlorococcus marinus (strain MIT 9215).